The chain runs to 342 residues: Surface presentation of antigens protein SpaS (342 aa).

Transmembrane regions (helical) follow at residues Leu-28–Ser-48, Phe-70–Leu-90, Glu-133–Ile-153, Ile-158–Phe-178, Ile-181–Phe-201, and His-260–Ile-280.

The protein belongs to the type III secretion exporter family.

Its subcellular location is the cell inner membrane. Required for surface presentation of invasion plasmid antigens. Could play a role in preserving the translocation competence of the ipa antigens. Required for invasion and for secretion of the three ipa proteins. In Shigella flexneri, this protein is Surface presentation of antigens protein SpaS (spaS).